The following is a 177-amino-acid chain: Voltage-dependent L-type calcium channel subunit alpha-1C (177 aa).

A helical transmembrane segment spans residues 27–45; it reads ITFFRLFRVMRLVKLLSRG. Residues 64-84 traverse the membrane as a helical segment; it reads YVALLIVMLFFIYAVIGMQVF. Asn90 is a glycosylation site (N-linked (GlcNAc...) asparagine). The segment at residues 107–125 is an intramembrane region (pore-forming); that stretch reads AVLLLFRCATGEAWQEIML. Positions 116-119 match the Selectivity filter of repeat IV motif; it reads TGEA. A disulfide bond links Cys133 and Cys149. Residue Asn141 is glycosylated (N-linked (GlcNAc...) asparagine). The helical transmembrane segment at 154–177 threads the bilayer; the sequence is AVFYFISFYMLCAFLIIDLFVAVI.

The protein belongs to the calcium channel alpha-1 subunit (TC 1.A.1.11) family. CACNA1C subfamily. Component of a calcium channel complex consisting of a pore-forming alpha subunit (CACNA1C) and ancillary beta, gamma and delta subunits. The channel complex contains alpha, beta, gamma and delta subunits in a 1:1:1:1 ratio, i.e. it contains only one of each type of subunit. CACNA1C channel activity is modulated by ancillary subunits, such as CACNB2, CACNB3, CACNA2D1 and CACNA2D4. Phosphorylation by PKA activates the channel.

It localises to the cell membrane. The protein localises to the perikaryon. It is found in the postsynaptic density membrane. Its subcellular location is the cell projection. The protein resides in the dendrite. It localises to the sarcolemma. The protein localises to the T-tubule. It catalyses the reaction Ca(2+)(in) = Ca(2+)(out). Inhibited by dihydropyridines (DHP), such as isradipine. Channel activity is regulated by Ca(2+) and calmodulin. Its function is as follows. Pore-forming, alpha-1C subunit of the voltage-gated calcium channel that gives rise to L-type calcium currents. Mediates influx of calcium ions into the cytoplasm, and thereby triggers calcium release from the sarcoplasm. Plays an important role in excitation-contraction coupling in the heart. Required for normal heart development and normal regulation of heart rhythm. Required for normal contraction of smooth muscle cells in blood vessels and in the intestine. Essential for normal blood pressure regulation via its role in the contraction of arterial smooth muscle cells. Long-lasting (L-type) calcium channels belong to the 'high-voltage activated' (HVA) group. This chain is Voltage-dependent L-type calcium channel subunit alpha-1C (CACNA1C), found in Gallus gallus (Chicken).